The primary structure comprises 85 residues: Protein WIR1B (85 aa).

Residues 1–12 (MASHSAAGRRPT) are Cytoplasmic-facing. Residues 13–34 (ALVHIALFVAIAAVIINSSVCL) traverse the membrane as a helical segment. At 35 to 85 (GAAVHDAATSGTGALDPNVPAVPTPGGAGQPYTGRGCRTVYGCKPPAGSQP) the chain is on the extracellular side.

The protein resides in the membrane. Functionally, associated with pathogen defense. This chain is Protein WIR1B (WIR1B), found in Triticum aestivum (Wheat).